The primary structure comprises 291 residues: Nitrogenase iron protein (291 aa).

11–18 (GKGGIGKS) is an ATP binding site. Residue Cys-99 participates in [4Fe-4S] cluster binding. Arg-102 carries the post-translational modification ADP-ribosylarginine; by dinitrogenase reductase ADP-ribosyltransferase. A [4Fe-4S] cluster-binding site is contributed by Cys-133.

Belongs to the NifH/BchL/ChlL family. In terms of assembly, homodimer. [4Fe-4S] cluster serves as cofactor. The reversible ADP-ribosylation of Arg-102 inactivates the nitrogenase reductase and regulates nitrogenase activity.

The catalysed reaction is N2 + 8 reduced [2Fe-2S]-[ferredoxin] + 16 ATP + 16 H2O = H2 + 8 oxidized [2Fe-2S]-[ferredoxin] + 2 NH4(+) + 16 ADP + 16 phosphate + 6 H(+). Its function is as follows. The key enzymatic reactions in nitrogen fixation are catalyzed by the nitrogenase complex, which has 2 components: the iron protein and the molybdenum-iron protein. The polypeptide is Nitrogenase iron protein (Cereibacter sphaeroides (strain ATCC 17023 / DSM 158 / JCM 6121 / CCUG 31486 / LMG 2827 / NBRC 12203 / NCIMB 8253 / ATH 2.4.1.) (Rhodobacter sphaeroides)).